The chain runs to 104 residues: Thiosulfate sulfurtransferase PspE (104 aa).

A signal peptide spans 1–19 (MFKKGLLALALVFSLPVFA). Residues 20-104 (AEHWIDVRVP…KDIAMPKVKG (85 aa)) form the Rhodanese domain. The active-site Cysteine persulfide intermediate is Cys67.

Monomer.

Its subcellular location is the periplasm. The catalysed reaction is thiosulfate + hydrogen cyanide = thiocyanate + sulfite + 2 H(+). Its activity is regulated as follows. Inhibited by thiosulfate above 100 mM, particularly at low cyanide concentrations (&lt;5 mM). Inhibited by sodium sulfate or sodium chloride at 0.25 M which gives around 50% inhibition of rhodanese activity. Addition of sodium phosphate at the same concentration results in about 65% inhibition. Sulfite strongly inhibits PspE activity (1 mM sodium sulfite resulted in more than 50% inhibition of rhodanese activity). Functionally, the phage shock protein (psp) operon (pspABCDE) may play a significant role in the competition for survival under nutrient- or energy-limited conditions. PspE catalyzes the sulfur-transfer reaction from thiosulfate to cyanide, to form sulfite and thiocyanate. Also able to use dithiol (dithiothreitol) as an alternate sulfur acceptor. Also possesses a very low mercaptopyruvate sulfurtransferase activity. The protein is Thiosulfate sulfurtransferase PspE (pspE) of Escherichia coli (strain K12).